A 635-amino-acid chain; its full sequence is Interferon-induced GTP-binding protein Mx1 (635 aa).

The region spanning 31–309 is the Dynamin-type G domain; it reads DLALPAIAVI…LVHHIELSLP (279 aa). The interval 41–48 is G1 motif; that stretch reads GDQSSGKS. 41–48 provides a ligand contact to GTP; the sequence is GDQSSGKS. The tract at residues 66 to 68 is G2 motif; that stretch reads VTR. Residues 147 to 150 are G3 motif; it reads DLPG. Residues 147–151 and 216–219 contribute to the GTP site; these read DLPGI and TKPD. The G4 motif stretch occupies residues 216-219; the sequence is TKPD. Residues 248-251 are G5 motif; the sequence is RCRG. One can recognise a GED domain in the interval 549–635; sequence LEELMRHLKS…MEARNYLVKF (87 aa).

Belongs to the TRAFAC class dynamin-like GTPase superfamily. Dynamin/Fzo/YdjA family.

Its subcellular location is the cytoplasm. The chain is Interferon-induced GTP-binding protein Mx1 (mx1) from Ictalurus punctatus (Channel catfish).